We begin with the raw amino-acid sequence, 162 residues long: Sorting nexin-3 (162 aa).

Ala-2 bears the N-acetylalanine mark. In terms of domain architecture, PX spans 27 to 151 (NFLEIDVSNP…HMFLQDEIID (125 aa)). Arg-43 bears the Omega-N-methylarginine mark. Positions 70, 72, 95, and 118 each coordinate a 1,2-diacyl-sn-glycero-3-phospho-(1D-myo-inositol-3-phosphate). Ser-72 bears the Phosphoserine mark. Lys-95 participates in a covalent cross-link: Glycyl lysine isopeptide (Lys-Gly) (interchain with G-Cter in SUMO2). The tract at residues 147–162 (DEIIDKSYTPSKIRHA) is binds predominantly to PtdIns(P5) and weaker to PtdIns(P3) abd PtdIns(P4); involved in neurite outgrowth regulation.

The protein belongs to the sorting nexin family. Interacts with VPS26A, VPS29 and VPS35; the interaction with VPS35 is direct. The association with the retromer CSC subcomplex subunits is proposed to represent a functional distinct retromer variant described as SNX3-retromer complex. Interacts with USP10 and SCNN1A. Interacts with TRFC. Interacts with SNX8; 2 molecules of SNX8 seems to associate with one molecule of SNX3. Interacts with PTPRU. Interacts with MON2 and DOP1B. In terms of processing, ubiquitinated, leading to its proteasomal degradation. Deubiquitinated by USP10.

The protein resides in the early endosome. Its subcellular location is the cytoplasmic vesicle. The protein localises to the phagosome. Phosphoinositide-binding protein required for multivesicular body formation. Specifically binds phosphatidylinositol 3-phosphate (PtdIns(P3)). Can also bind phosphatidylinositol 4-phosphate (PtdIns(P4)), phosphatidylinositol 5-phosphate (PtdIns(P5)) and phosphatidylinositol 3,5-biphosphate (PtdIns(3,5)P2). Plays a role in protein transport between cellular compartments. Together with RAB7A facilitates endosome membrane association of the retromer cargo-selective subcomplex (CSC/VPS). May in part act as component of the SNX3-retromer complex which mediates the retrograde endosome-to-TGN transport of WLS distinct from the SNX-BAR retromer pathway. Promotes stability and cell surface expression of epithelial sodium channel (ENAC) subunits SCNN1A and SCNN1G. Not involved in EGFR degradation. Involved in the regulation of phagocytosis in dendritic cells possibly by regulating EEA1 recruitment to the nascent phagosomes. Involved in iron homeostasis through regulation of endocytic recycling of the transferrin receptor TFRC presumably by delivering the transferrin:transferrin receptor complex to recycling endosomes; the function may involve the CSC retromer subcomplex. In the case of Salmonella enterica infection plays arole in maturation of the Salmonella-containing vacuole (SCV) and promotes recruitment of LAMP1 to SCVs. The protein is Sorting nexin-3 of Homo sapiens (Human).